We begin with the raw amino-acid sequence, 50 residues long: Large ribosomal subunit protein bL33 (50 aa).

This sequence belongs to the bacterial ribosomal protein bL33 family.

This is Large ribosomal subunit protein bL33 from Solibacter usitatus (strain Ellin6076).